The chain runs to 331 residues: Isopenicillin N synthase (331 aa).

Positions 87, 91, 183, and 189 each coordinate isopenicillin N. N-[(5S)-5-amino-5-carboxypentanoyl]-L-cysteinyl-D-valine-binding residues include Arg87, Tyr91, Ser183, Tyr189, His214, and Asp216. Residues 176 to 288 (KKEDALSSVV…RQSLPFFVNL (113 aa)) form the Fe2OG dioxygenase domain. His214, Asp216, and His270 together coordinate Fe(2+). Arg279 contributes to the 2-oxoglutarate binding site. Ser281 contributes to the isopenicillin N binding site. N-[(5S)-5-amino-5-carboxypentanoyl]-L-cysteinyl-D-valine is bound at residue Ser281.

It belongs to the iron/ascorbate-dependent oxidoreductase family. In terms of assembly, monomer. It depends on Fe(2+) as a cofactor.

It localises to the cytoplasm. The protein resides in the cytosol. It carries out the reaction N-[(5S)-5-amino-5-carboxypentanoyl]-L-cysteinyl-D-valine + O2 = isopenicillin N + 2 H2O. It functions in the pathway antibiotic biosynthesis; penicillin G biosynthesis; penicillin G from L-alpha-aminoadipate and L-cysteine and L-valine: step 2/3. Its function is as follows. Isopenicillin N synthase; part of the gene cluster that mediates the biosynthesis of penicillin, the world's most important antibiotic. IpnA catalyzes the cyclization of the tripeptide N-[(5S)-5-amino-5-carboxypentanoyl]-L-cysteinyl-D-valine (LLD-ACV or ACV) to form isopenicillin N (IPN) that contains the beta-lactam nucleus. The penicillin biosynthesis occurs via 3 enzymatic steps, the first corresponding to the production of the tripeptide N-[(5S)-5-amino-5-carboxypentanoyl]-L-cysteinyl-D-valine (LLD-ACV or ACV) by the NRPS acvA. The tripeptide ACV is then cyclized to isopenicillin N (IPN) by the isopenicillin N synthase ipnA that forms the beta-lactam nucleus. Finally, the alpha-aminoadipyl side chain is exchanged for phenylacetic acid by the isopenicillin N acyltransferase aatA to yield penicillin in the peroxisomal matrix. The sequence is that of Isopenicillin N synthase from Penicillium chrysogenum (Penicillium notatum).